The sequence spans 516 residues: MKCTVVALVLLVAVQCLVLGAGPAAAAKARRTRQGDYLNRLRGSPSSRASWESLAAVEEQTTTKAAGRPAPVAAAVEAGRKEADRVEALPGHPRGVDFAQYAGYVTVDAAAGRALFYYLAEAVGGNGDKTKPLLLWLNGGPGCSSLGYGAMEELGPFRVMSDGKTLYSNPYSWNHAANVLFLESPAGVGYSYSNTTADYGRSGDNGTAEDAYQFLDNWLERFPEYKGREFYITGESYAGHYVPQLAHAILRHASPDINLKGIMIGNAVINDWTDSKGMYDFFWTHALISDETADGISKNCNFTAYGAGVASNALCDAASDEVGESLADIDIYNIYAPNCQSEKLVTPPIAPSIDNFDPCTDYYVEAYLNRPDVQKALHANVTRLDHPWSACSDVLTRWVDSAKTVLPIIQELMKNSIRVWVYSGDTDGRVPVTSSRLSVNQLQLPVAAKWRPWFSSTKGAGEVGGYIVQYKGDLSLVTVRGAGHEVPSYQPRRALVLVQNFLAGKALPDCKECEQD.

Residues 1 to 20 form the signal peptide; sequence MKCTVVALVLLVAVQCLVLG. Residues 21–77 constitute a propeptide that is removed on maturation; the sequence is AGPAAAAKARRTRQGDYLNRLRGSPSSRASWESLAAVEEQTTTKAAGRPAPVAAAVE. Disulfide bonds link C143–C391, C300–C315, and C339–C359. N194 and N205 each carry an N-linked (GlcNAc...) asparagine glycan. S236 is a catalytic residue. The N-linked (GlcNAc...) asparagine glycan is linked to N301. Residues 342–352 constitute a propeptide, linker peptide; sequence EKLVTPPIAPS. A glycan (N-linked (GlcNAc...) asparagine) is linked at N380. Catalysis depends on residues D427 and H484.

It belongs to the peptidase S10 family. Carboxypeptidase II is a dimer, where each monomer is composed of two chains linked by a disulfide bond. The linker peptide is endoproteolytically excised during enzyme maturation.

The enzyme catalyses Preferential release of a C-terminal arginine or lysine residue.. This Hordeum vulgare (Barley) protein is Serine carboxypeptidase II-3 (CXP;2-3).